Reading from the N-terminus, the 113-residue chain is Seminal vesicle secretory protein 4 (113 aa).

The signal sequence occupies residues 1 to 21; the sequence is MNSTSLFLFSLLLLLVTGAIG. The segment at 31-113 is disordered; that stretch reads SEETVRESFS…KSRFSQDALE (83 aa). Composition is skewed to low complexity over residues 38–50 and 83–98; these read SFSM…MSRS and IISS…GESS.

The protein belongs to the SVP2/SVP5/SVP6 family. As to expression, testis.

The protein resides in the secreted. The protein localises to the extracellular space. This chain is Seminal vesicle secretory protein 4 (Svs4), found in Mus musculus (Mouse).